A 364-amino-acid chain; its full sequence is Chorismate synthase (364 aa).

Residues R47 and R53 each contribute to the NADP(+) site. Residues 124–126, G286, 301–305, and R327 contribute to the FMN site; these read RSS and KPTAT.

It belongs to the chorismate synthase family. Homotetramer. It depends on FMNH2 as a cofactor.

The enzyme catalyses 5-O-(1-carboxyvinyl)-3-phosphoshikimate = chorismate + phosphate. It functions in the pathway metabolic intermediate biosynthesis; chorismate biosynthesis; chorismate from D-erythrose 4-phosphate and phosphoenolpyruvate: step 7/7. Its function is as follows. Catalyzes the anti-1,4-elimination of the C-3 phosphate and the C-6 proR hydrogen from 5-enolpyruvylshikimate-3-phosphate (EPSP) to yield chorismate, which is the branch point compound that serves as the starting substrate for the three terminal pathways of aromatic amino acid biosynthesis. This reaction introduces a second double bond into the aromatic ring system. The sequence is that of Chorismate synthase from Acaryochloris marina (strain MBIC 11017).